A 373-amino-acid chain; its full sequence is 3-isopropylmalate dehydrogenase gloI (373 aa).

Positions 92, 98, and 108 each coordinate substrate. Positions 228, 253, and 257 each coordinate Mg(2+). NADP(+) is bound by residues 294-300 (HGSAPDI) and Asn307.

Belongs to the isocitrate and isopropylmalate dehydrogenases family. As to quaternary structure, homodimer. It depends on Mg(2+) as a cofactor. The cofactor is Mn(2+).

The catalysed reaction is (2R,3S)-3-isopropylmalate + NAD(+) = 4-methyl-2-oxopentanoate + CO2 + NADH. It functions in the pathway mycotoxin biosynthesis. Functionally, 3-isopropylmalate dehydrogenase; part of the gene cluster that mediates the biosynthesis of pneumocandins, lipohexapeptides of the echinocandin family that prevent fungal cell wall formation by non-competitive inhibition of beta-1,3-glucan synthase. The 10,12-dimethylmyristoyl side chain is synthesized by the reducing polyketide synthase gloL/GLPKS4. The thioesterase gloN/GLHYD exclusively interacts with gloL/GLPKS4 to maintain turnover of the polyketide side chain. The 10R,12S-dimethylmyristic acid is then transferred to the first thiolation domain of the nonribosomal peptide synthetase gloA/GLNRPS4 by the acyl-AMP ligase gloD/GLligase, followed by its acylation to L-ornithine to trigger elongation of the cyclic hexapeptide. L-ornithine, 4R-hydroxyl-L-proline (generated from L-proline by the dioxygenase gloF/GLOXY2), 3S-hydroxyl-L-homotyrosine (generated by gloG/GLHtyB, gloH/GLHtyA, gloI/GLHtyC, gloJ/GLHtyD and hydroxylated at C-3 by the dioxygenase gloM/GLOXY1), 3R-hydroxyl-L-glutamine (generated from L-glutamine probably by the dioxygenase gloE/GLOXY3) and 3S-hydroxyl-L-proline (generated from L-proline by the dioxygenase gloF/GLOXY2 to yield pneumocandin B0), or 3S-hydroxyl-4S-methyl-L-proline (generated from L-leucine by the dioxygenase gloC/GLOXY4 to yield pneumocandin A0) are sequentially added to the growing chain. The last C domain of gloA/GLNRPS4 is proposed to be responsible for cyclization by condensation to form the peptide bond between L-ornithine and 3S-hydroxyl-4S-methyl-L-proline (for pneumocandin A0) or 3S-hydroxyl-L-proline (for pneumocandin B0). Finally, the subsequent C-4 hydroxylation of 3S-hydroxyl-L-homotyrosine and L-ornithine dihydroxylation at C-4 and C-5 are performed by the cytochrome P450 monooxygenases gloP/GLP450-1 and gloO/GLP450-2, respectively. The sequence is that of 3-isopropylmalate dehydrogenase gloI from Glarea lozoyensis (strain ATCC 20868 / MF5171).